The primary structure comprises 323 residues: uncharacterized protein (323 aa).

Residues 1-45 (MLATLSQIRAWSTEHLIDAAGYWTETADRWEDVFLQMRNQAHAIA) form the signal peptide. Positions 186–227 (FKQDGPTPPPPGAPHPSGGADGPYSDPITSMMLPPAGTEAPV) are disordered. Helical transmembrane passes span 269–289 (SAEW…VVGT) and 290–310 (ALAI…LLGV).

The protein localises to the cell membrane. This is an uncharacterized protein from Mycobacterium tuberculosis (strain CDC 1551 / Oshkosh).